The sequence spans 317 residues: F-box protein FBW2 (317 aa).

The region spanning 7-54 (FRHWDELIPDALGLIFSHLPLQEVLTVVPRVCKAWNRAVTGPYCWQEI) is the F-box domain.

Part of a SCF (SKP1-cullin-F-box) protein ligase complex. Interacts with CUL1, CUL2 and SPK1B/ASK2.

It is found in the nucleus. The protein operates within protein modification; protein ubiquitination. In terms of biological role, component of SCF(ASK-cullin-F-box) E3 ubiquitin ligase complexes, which may mediate the ubiquitination and subsequent proteasomal degradation of target proteins. This Arabidopsis thaliana (Mouse-ear cress) protein is F-box protein FBW2 (FBW2).